A 230-amino-acid polypeptide reads, in one-letter code: Cytidylate kinase (230 aa).

Glycine 12–threonine 20 is an ATP binding site.

Belongs to the cytidylate kinase family. Type 1 subfamily.

It localises to the cytoplasm. The catalysed reaction is CMP + ATP = CDP + ADP. The enzyme catalyses dCMP + ATP = dCDP + ADP. This is Cytidylate kinase from Corynebacterium diphtheriae (strain ATCC 700971 / NCTC 13129 / Biotype gravis).